The sequence spans 270 residues: Putative methylsterol monooxygenase DDB_G0269788 (270 aa).

3 helical membrane-spanning segments follow: residues 31–51 (FIAH…CDFM), 82–102 (IFVQ…IGLS), and 110–130 (IPYL…YFYW). Positions 118–249 (ACCFLIEDFY…FTYLDKIFGT (132 aa)) constitute a Fatty acid hydroxylase domain. Residues 132–136 (HRALH) carry the Histidine box-1 motif. The short motif at 145 to 149 (HKVHH) is the Histidine box-2 element. A Histidine box-3 motif is present at residues 224–230 (FHDFHHE).

Belongs to the sterol desaturase family. Fe cation is required as a cofactor.

It is found in the endoplasmic reticulum membrane. It carries out the reaction 4,4-dimethyl-5alpha-cholest-7-en-3beta-ol + 6 Fe(II)-[cytochrome b5] + 3 O2 + 5 H(+) = 4alpha-carboxy-4beta-methyl-5alpha-cholest-7-ene-3beta-ol + 6 Fe(III)-[cytochrome b5] + 4 H2O. It participates in steroid biosynthesis; zymosterol biosynthesis; zymosterol from lanosterol: step 3/6. This Dictyostelium discoideum (Social amoeba) protein is Putative methylsterol monooxygenase DDB_G0269788.